The following is a 310-amino-acid chain: Acetylglutamate kinase (310 aa).

Residues 74–75 (GG), Arg96, and Asn201 contribute to the substrate site.

It belongs to the acetylglutamate kinase family. ArgB subfamily.

The protein resides in the cytoplasm. The enzyme catalyses N-acetyl-L-glutamate + ATP = N-acetyl-L-glutamyl 5-phosphate + ADP. Its pathway is amino-acid biosynthesis; L-arginine biosynthesis; N(2)-acetyl-L-ornithine from L-glutamate: step 2/4. Its function is as follows. Catalyzes the ATP-dependent phosphorylation of N-acetyl-L-glutamate. The sequence is that of Acetylglutamate kinase from Arthrobacter sp. (strain FB24).